The sequence spans 340 residues: Eukaryotic translation initiation factor 3 subunit I (340 aa).

6 WD repeats span residues 8–47, 50–89, 91–135, 150–189, 194–233, and 291–330; these read GHER…RLGT, GHQG…CVKV, DFPT…GEGN, CEQS…QLQN, EFDY…VMKT, and GHFG…FDFM.

It belongs to the eIF-3 subunit I family. In terms of assembly, component of the eukaryotic translation initiation factor 3 (eIF-3) complex.

The protein resides in the cytoplasm. In terms of biological role, component of the eukaryotic translation initiation factor 3 (eIF-3) complex, which is involved in protein synthesis of a specialized repertoire of mRNAs and, together with other initiation factors, stimulates binding of mRNA and methionyl-tRNAi to the 40S ribosome. The eIF-3 complex specifically targets and initiates translation of a subset of mRNAs involved in cell proliferation. This chain is Eukaryotic translation initiation factor 3 subunit I, found in Coccidioides immitis (strain RS) (Valley fever fungus).